The primary structure comprises 155 residues: Small ribosomal subunit protein uS7 (155 aa).

This sequence belongs to the universal ribosomal protein uS7 family. In terms of assembly, part of the 30S ribosomal subunit. Contacts proteins S9 and S11.

Its function is as follows. One of the primary rRNA binding proteins, it binds directly to 16S rRNA where it nucleates assembly of the head domain of the 30S subunit. Is located at the subunit interface close to the decoding center, probably blocks exit of the E-site tRNA. This Chlorobium phaeobacteroides (strain BS1) protein is Small ribosomal subunit protein uS7.